The chain runs to 438 residues: Glutamate-1-semialdehyde 2,1-aminomutase (438 aa).

Lys-277 is modified (N6-(pyridoxal phosphate)lysine).

It belongs to the class-III pyridoxal-phosphate-dependent aminotransferase family. HemL subfamily. In terms of assembly, homodimer. It depends on pyridoxal 5'-phosphate as a cofactor.

It is found in the cytoplasm. It carries out the reaction (S)-4-amino-5-oxopentanoate = 5-aminolevulinate. Its pathway is porphyrin-containing compound metabolism; protoporphyrin-IX biosynthesis; 5-aminolevulinate from L-glutamyl-tRNA(Glu): step 2/2. The protein operates within porphyrin-containing compound metabolism; chlorophyll biosynthesis. This chain is Glutamate-1-semialdehyde 2,1-aminomutase, found in Synechococcus sp. (strain CC9311).